The chain runs to 165 residues: Cyclic pyranopterin monophosphate synthase (165 aa).

Residues 79–81 (LCH) and 117–118 (ME) each bind substrate. Residue D132 is part of the active site.

The protein belongs to the MoaC family. Homohexamer; trimer of dimers.

It catalyses the reaction (8S)-3',8-cyclo-7,8-dihydroguanosine 5'-triphosphate = cyclic pyranopterin phosphate + diphosphate. Its pathway is cofactor biosynthesis; molybdopterin biosynthesis. Catalyzes the conversion of (8S)-3',8-cyclo-7,8-dihydroguanosine 5'-triphosphate to cyclic pyranopterin monophosphate (cPMP). This is Cyclic pyranopterin monophosphate synthase from Chloroflexus aggregans (strain MD-66 / DSM 9485).